The chain runs to 1017 residues: Probable isoleucine--tRNA ligase, cytoplasmic (1017 aa).

The 'HIGH' region signature appears at 45 to 55 (PFATGLPHYGH). The 'KMSKS' region motif lies at 609 to 613 (KMSKR). Lys-612 provides a ligand contact to ATP.

This sequence belongs to the class-I aminoacyl-tRNA synthetase family.

The protein resides in the cytoplasm. It catalyses the reaction tRNA(Ile) + L-isoleucine + ATP = L-isoleucyl-tRNA(Ile) + AMP + diphosphate. The polypeptide is Probable isoleucine--tRNA ligase, cytoplasmic (Encephalitozoon cuniculi (strain GB-M1) (Microsporidian parasite)).